We begin with the raw amino-acid sequence, 646 residues long: Chaperone protein DnaK (646 aa).

Thr198 is subject to Phosphothreonine; by autocatalysis. The segment at 603 to 646 (EQAQQAGGAEGFDPNAFQGGDAGQQKADDGVVDAEFTEVKDDKK) is disordered. Residues 618-627 (AFQGGDAGQQ) show a composition bias toward low complexity.

Belongs to the heat shock protein 70 family.

Its function is as follows. Acts as a chaperone. In Acinetobacter baumannii (strain AB307-0294), this protein is Chaperone protein DnaK.